The chain runs to 291 residues: Segregation and condensation protein A (291 aa).

This sequence belongs to the ScpA family. In terms of assembly, component of a cohesin-like complex composed of ScpA, ScpB and the Smc homodimer, in which ScpA and ScpB bind to the head domain of Smc. The presence of the three proteins is required for the association of the complex with DNA.

It localises to the cytoplasm. In terms of biological role, participates in chromosomal partition during cell division. May act via the formation of a condensin-like complex containing Smc and ScpB that pull DNA away from mid-cell into both cell halves. This is Segregation and condensation protein A from Malacoplasma penetrans (strain HF-2) (Mycoplasma penetrans).